Consider the following 204-residue polypeptide: Small ribosomal subunit protein uS4 (204 aa).

Positions Arg-92–Gly-157 constitute an S4 RNA-binding domain.

It belongs to the universal ribosomal protein uS4 family. In terms of assembly, part of the 30S ribosomal subunit. Contacts protein S5. The interaction surface between S4 and S5 is involved in control of translational fidelity.

Functionally, one of the primary rRNA binding proteins, it binds directly to 16S rRNA where it nucleates assembly of the body of the 30S subunit. In terms of biological role, with S5 and S12 plays an important role in translational accuracy. The protein is Small ribosomal subunit protein uS4 of Streptomyces avermitilis (strain ATCC 31267 / DSM 46492 / JCM 5070 / NBRC 14893 / NCIMB 12804 / NRRL 8165 / MA-4680).